The following is a 205-amino-acid chain: Guanylate kinase (205 aa).

The Guanylate kinase-like domain maps to 5–184 (GLLIVLSGPS…AVQKIKGIVE (180 aa)). 12-19 (GPSGVGKG) is a binding site for ATP.

This sequence belongs to the guanylate kinase family.

The protein localises to the cytoplasm. It carries out the reaction GMP + ATP = GDP + ADP. Functionally, essential for recycling GMP and indirectly, cGMP. In Listeria monocytogenes serotype 4b (strain F2365), this protein is Guanylate kinase.